A 740-amino-acid polypeptide reads, in one-letter code: Ion-translocating oxidoreductase complex subunit C (740 aa).

4Fe-4S ferredoxin-type domains lie at 369–397 and 407–436; these read GEPQ…QQLY and KATT…VQYF. The [4Fe-4S] cluster site is built by C377, C380, C383, C387, C416, C419, C422, and C426. Residues 602 to 716 are disordered; it reads KLEQQQANAE…EPEEQVDPRK (115 aa).

It belongs to the 4Fe4S bacterial-type ferredoxin family. RnfC subfamily. The complex is composed of six subunits: RsxA, RsxB, RsxC, RsxD, RsxE and RsxG. It depends on [4Fe-4S] cluster as a cofactor.

The protein resides in the cell inner membrane. Functionally, part of a membrane-bound complex that couples electron transfer with translocation of ions across the membrane. Required to maintain the reduced state of SoxR. The chain is Ion-translocating oxidoreductase complex subunit C from Escherichia coli (strain SE11).